The sequence spans 280 residues: Eukaryotic translation initiation factor 3 subunit F-1 (280 aa).

The MPN domain maps to 8 to 138 (VRVHPVVLFQ…LRSYVCIQLG (131 aa)).

Belongs to the eIF-3 subunit F family. Component of the eukaryotic translation initiation factor 3 (eIF-3) complex. The eIF-3 complex interacts with pix.

It localises to the cytoplasm. Component of the eukaryotic translation initiation factor 3 (eIF-3) complex, which is involved in protein synthesis of a specialized repertoire of mRNAs and, together with other initiation factors, stimulates binding of mRNA and methionyl-tRNAi to the 40S ribosome. The eIF-3 complex specifically targets and initiates translation of a subset of mRNAs involved in cell proliferation. The protein is Eukaryotic translation initiation factor 3 subunit F-1 of Drosophila persimilis (Fruit fly).